The sequence spans 184 residues: Threonylcarbamoyl-AMP synthase (184 aa).

The 184-residue stretch at 1-184 folds into the YrdC-like domain; that stretch reads MNNLENIVEQ…IFTQHIFRQG (184 aa).

This sequence belongs to the SUA5 family. TsaC subfamily.

It localises to the cytoplasm. It carries out the reaction L-threonine + hydrogencarbonate + ATP = L-threonylcarbamoyladenylate + diphosphate + H2O. Functionally, required for the formation of a threonylcarbamoyl group on adenosine at position 37 (t(6)A37) in tRNAs that read codons beginning with adenine. Catalyzes the conversion of L-threonine, HCO(3)(-)/CO(2) and ATP to give threonylcarbamoyl-AMP (TC-AMP) as the acyladenylate intermediate, with the release of diphosphate. The chain is Threonylcarbamoyl-AMP synthase from Actinobacillus pleuropneumoniae serotype 5b (strain L20).